The primary structure comprises 266 residues: Undecaprenyl-diphosphatase (266 aa).

The next 7 helical transmembrane spans lie at 8-28 (VLAL…AHLI), 39-59 (QGLA…VIYF), 87-107 (WAVG…HDII), 113-133 (SAQV…FADV), 188-208 (SFLL…LGLV), 219-239 (MIVL…HYFL), and 246-266 (TMLP…FLFW).

It belongs to the UppP family.

It localises to the cell inner membrane. The enzyme catalyses di-trans,octa-cis-undecaprenyl diphosphate + H2O = di-trans,octa-cis-undecaprenyl phosphate + phosphate + H(+). Functionally, catalyzes the dephosphorylation of undecaprenyl diphosphate (UPP). Confers resistance to bacitracin. This Thioalkalivibrio sulfidiphilus (strain HL-EbGR7) protein is Undecaprenyl-diphosphatase.